The following is a 420-amino-acid chain: Phosphoglycerate kinase (420 aa).

14 residues coordinate (2R)-3-phosphoglycerate: V26, D27, Y28, N29, Q42, R43, S66, H67, G69, R70, L125, R126, H173, and R174. At Y199 the chain carries Phosphotyrosine. S206 carries the post-translational modification Phosphoserine. The interval 209–228 (KPFLAILGGAKVSDKIKLIE) is calmodulin binding. G217 is a binding site for ADP. G217 is a binding site for CDP. 2 residues coordinate AMP: A218 and K219. A218 contacts ATP. A Mg(2+)-binding site is contributed by A218. D222 provides a ligand contact to CDP. D222 serves as a coordination point for Mg(2+). K223 contacts AMP. Residue K223 coordinates ATP. G241 is an ADP binding site. A CDP-binding site is contributed by G241. Residues G242 and G316 each coordinate AMP. Residues G242 and G316 each contribute to the ATP site. CDP contacts are provided by G341 and F346. F346 contributes to the ADP binding site. E347 serves as a coordination point for AMP. Residues E347, D378, and T379 each coordinate ATP. D378 serves as a coordination point for Mg(2+). S393 carries the phosphoserine modification.

Belongs to the phosphoglycerate kinase family. Monomer. Interacts with calmodulin in the presence of Ca(2+). Requires Mg(2+) as cofactor.

It localises to the cytoplasm. The enzyme catalyses (2R)-3-phosphoglycerate + ATP = (2R)-3-phospho-glyceroyl phosphate + ADP. The protein operates within carbohydrate degradation; glycolysis; pyruvate from D-glyceraldehyde 3-phosphate: step 2/5. In Dictyostelium discoideum (Social amoeba), this protein is Phosphoglycerate kinase.